A 433-amino-acid chain; its full sequence is Chaperone SurA (433 aa).

The signal sequence occupies residues 1 to 24 (MDGIKLLLSIIILYFYTYINCAIA). PpiC domains lie at 173 to 274 (NTTF…KVHD) and 285 to 385 (ITEV…QLQN).

The protein resides in the periplasm. It carries out the reaction [protein]-peptidylproline (omega=180) = [protein]-peptidylproline (omega=0). Functionally, chaperone involved in the correct folding and assembly of outer membrane proteins. Recognizes specific patterns of aromatic residues and the orientation of their side chains, which are found more frequently in integral outer membrane proteins. May act in both early periplasmic and late outer membrane-associated steps of protein maturation. The protein is Chaperone SurA of Baumannia cicadellinicola subsp. Homalodisca coagulata.